The following is a 136-amino-acid chain: Aspartate 1-decarboxylase (136 aa).

The active-site Schiff-base intermediate with substrate; via pyruvic acid is the S25. At S25 the chain carries Pyruvic acid (Ser). T57 lines the substrate pocket. Y58 functions as the Proton donor in the catalytic mechanism. 73 to 75 (GAA) is a binding site for substrate.

The protein belongs to the PanD family. Heterooctamer of four alpha and four beta subunits. Pyruvate serves as cofactor. Post-translationally, is synthesized initially as an inactive proenzyme, which is activated by self-cleavage at a specific serine bond to produce a beta-subunit with a hydroxyl group at its C-terminus and an alpha-subunit with a pyruvoyl group at its N-terminus.

It localises to the cytoplasm. It carries out the reaction L-aspartate + H(+) = beta-alanine + CO2. The protein operates within cofactor biosynthesis; (R)-pantothenate biosynthesis; beta-alanine from L-aspartate: step 1/1. Its function is as follows. Catalyzes the pyruvoyl-dependent decarboxylation of aspartate to produce beta-alanine. This chain is Aspartate 1-decarboxylase, found in Mycolicibacterium smegmatis (strain ATCC 700084 / mc(2)155) (Mycobacterium smegmatis).